The chain runs to 491 residues: Protein translocase subunit SecY (491 aa).

Residues 1–20 (MGWKEAAAPVLTRMPAVERP) lie on the Cytoplasmic side of the membrane. A helical transmembrane segment spans residues 21–47 (EGHVPFRRKMYWTGGVLVLYFFLTNVP). Topologically, residues 48–58 (LWGIQTAGNDF) are extracellular. Residues 59–66 (FGQFRSLL) constitute an intramembrane region (helical). The chain crosses the membrane as a discontinuously helical span at residues 59–87 (FGQFRSLLAGGQGTVLQLGIGPIVTASIV). An intramembrane segment occupies 67 to 78 (AGGQGTVLQLGI). Positions 79–87 (GPIVTASIV) form an intramembrane region, helical. The Cytoplasmic segment spans residues 88–109 (LQLLGGANLLGLDTDNDPRDQA). A helical membrane pass occupies residues 110 to 134 (IYQGLQKFLVGVMVVLTGAPMVFLG). At 135-152 (NFLQPSQQLAQSMPGGAF) the chain is on the extracellular side. A helical transmembrane segment spans residues 153 to 177 (GVEVLIFAQIAAGGILLLFMDEVIS). Over 178–183 (KWGVGS) the chain is Cytoplasmic. The helical transmembrane segment at 184-202 (GIGLFIVAGVSQSLVGGLV) threads the bilayer. Residues 203-244 (FWEGGVGSQGLLPTWFDIIVGNVSNMPPLLSGSGIEFLLMQA) lie on the Extracellular side of the membrane. The chain crosses the membrane as a helical span at residues 245–266 (GILGLLTTLFIYVVVVYAESVR). Topologically, residues 267–291 (VEIPLSHARVKGARGRFPVKLIYAS) are cytoplasmic. A helical membrane pass occupies residues 292–313 (VLPMILVRALQANIQFLGQILN). The Extracellular segment spans residues 314–365 (STLASMPTWLGVYGGNGQVTGGLFYYLAPIYSPNAWMWWTSGATAARWQVLI). A helical transmembrane segment spans residues 366–385 (RIAIDLSFMIIGGAIFAIFW). The Cytoplasmic segment spans residues 386 to 428 (VETADMGPDATARQIQNSGMQIPGFRKNQGVIEKVMERYIPQV). The helical transmembrane segment at 429-447 (TVIGGALVGLLAVMANMLG) threads the bilayer. Residues 448-452 (TIGNV) are Extracellular-facing. The helical transmembrane segment at 453-467 (SGTGLLLTISITYKL) threads the bilayer. The Cytoplasmic segment spans residues 468–491 (YEEIAEEQMMEMHPMMREMFGGGD).

The protein belongs to the SecY/SEC61-alpha family. As to quaternary structure, component of the Sec protein translocase complex. Heterotrimer consisting of alpha (SecY), beta (SecG) and gamma (SecE) subunits. The heterotrimers can form oligomers, although 1 heterotrimer is thought to be able to translocate proteins. Interacts with the ribosome. May interact with SecDF, and other proteins may be involved.

The protein resides in the cell membrane. In terms of biological role, the central subunit of the protein translocation channel SecYEG. Consists of two halves formed by TMs 1-5 and 6-10. These two domains form a lateral gate at the front which open onto the bilayer between TMs 2 and 7, and are clamped together by SecE at the back. The channel is closed by both a pore ring composed of hydrophobic SecY resides and a short helix (helix 2A) on the extracellular side of the membrane which forms a plug. The plug probably moves laterally to allow the channel to open. The ring and the pore may move independently. This is Protein translocase subunit SecY from Halobacterium salinarum (strain ATCC 700922 / JCM 11081 / NRC-1) (Halobacterium halobium).